The chain runs to 362 residues: Heat-inducible transcription repressor HrcA (362 aa).

The protein belongs to the HrcA family.

In terms of biological role, negative regulator of class I heat shock genes (grpE-dnaK-dnaJ and groELS operons). Prevents heat-shock induction of these operons. The chain is Heat-inducible transcription repressor HrcA from Bradyrhizobium sp. (strain BTAi1 / ATCC BAA-1182).